The chain runs to 462 residues: MAPLLQLLWLLTLLSTVALSPVPAKPWADDEQAWNLSSQELLAPARFALDMYNYGRAAGTRAVLGAVRGRVRRAGQGSLFSLEATLEEPPCNDPLVCPLPETKKTVLCSFEVLEELKEHLLLRRDCSPVNAKVTEFRNATFSSFLPLLDKDPLPQDFSVKMAPLFKDFMTTYNRTYESREEAQWRLTVFARNMIRAQKIQALDRGTAQYGITKFSDLTEEEFHTIYLNPLLQKESGRKMSPAKSINDLAPPEWDWRKKGAVTEVKNQGMCGSCWAFSVTGNVEGQWFLNRGTLLSLSEQELLDCDKVDKACLGGLPSNAYAAIKNLGGLETEDDYGYQGHVQTCNFSAQMAKVYINDSVELSRNENKIAAWLAQKGPISVAINAFGMQFYRHGIAHPFRPLCSPWFIDHAVLLVGYGNRSNIPYWAIKNSWGSDWGEEGYYYLYRGSGACGVNTMASSAVVN.

A signal peptide spans 1–19 (MAPLLQLLWLLTLLSTVAL). The propeptide at 20 to 248 (SPVPAKPWAD…MSPAKSINDL (229 aa)) is activation peptide. Residues asparagine 35, asparagine 138, and asparagine 173 are each glycosylated (N-linked (GlcNAc...) asparagine). 2 disulfide bridges follow: cysteine 270/cysteine 311 and cysteine 304/cysteine 344. The active site involves cysteine 273. 2 N-linked (GlcNAc...) asparagine glycosylation sites follow: asparagine 345 and asparagine 356. Cysteine 402 and cysteine 450 are oxidised to a cystine. Histidine 409 is a catalytic residue. An N-linked (GlcNAc...) asparagine glycan is attached at asparagine 418. The active site involves asparagine 429.

The protein belongs to the peptidase C1 family.

The protein localises to the lysosome. The enzyme catalyses The recombinant enzyme cleaves synthetic substrates with Phe and Leu (better than Val) in P2, with high specificity constant (kcat/Km) comparable to that of cathepsin L.. Its function is as follows. Thiol protease which is believed to participate in intracellular degradation and turnover of proteins. Has also been implicated in tumor invasion and metastasis. The polypeptide is Cathepsin F (Ctsf) (Mus musculus (Mouse)).